Consider the following 330-residue polypeptide: Ketol-acid reductoisomerase (NADP(+)) (330 aa).

The region spanning 2–181 (AKVYYDNDVN…GATRAGVIET (180 aa)) is the KARI N-terminal Rossmann domain. NADP(+) contacts are provided by residues 25–28 (YGSQ), Arg-48, Ser-52, and 82–85 (DEVQ). Residue His-107 is part of the active site. Residue Gly-133 participates in NADP(+) binding. The 146-residue stretch at 182 to 327 (TFKEETETDL…ADLRMMMPFI (146 aa)) folds into the KARI C-terminal knotted domain. Residues Asp-190, Glu-194, Glu-226, and Glu-230 each coordinate Mg(2+). Ser-251 is a binding site for substrate.

This sequence belongs to the ketol-acid reductoisomerase family. It depends on Mg(2+) as a cofactor.

It carries out the reaction (2R)-2,3-dihydroxy-3-methylbutanoate + NADP(+) = (2S)-2-acetolactate + NADPH + H(+). The catalysed reaction is (2R,3R)-2,3-dihydroxy-3-methylpentanoate + NADP(+) = (S)-2-ethyl-2-hydroxy-3-oxobutanoate + NADPH + H(+). It functions in the pathway amino-acid biosynthesis; L-isoleucine biosynthesis; L-isoleucine from 2-oxobutanoate: step 2/4. Its pathway is amino-acid biosynthesis; L-valine biosynthesis; L-valine from pyruvate: step 2/4. In terms of biological role, involved in the biosynthesis of branched-chain amino acids (BCAA). Catalyzes an alkyl-migration followed by a ketol-acid reduction of (S)-2-acetolactate (S2AL) to yield (R)-2,3-dihydroxy-isovalerate. In the isomerase reaction, S2AL is rearranged via a Mg-dependent methyl migration to produce 3-hydroxy-3-methyl-2-ketobutyrate (HMKB). In the reductase reaction, this 2-ketoacid undergoes a metal-dependent reduction by NADPH to yield (R)-2,3-dihydroxy-isovalerate. The chain is Ketol-acid reductoisomerase (NADP(+)) from Macrococcus caseolyticus (strain JCSC5402) (Macrococcoides caseolyticum).